Consider the following 88-residue polypeptide: MANHKSAEKRARQTIKRTERNRFYRTRLKNLTKAVRVAVASGDKDAALVALKDANKNFHSFVSKGFLKKETASRKVSRLAKLVSTLAA.

Positions 1–20 are disordered; that stretch reads MANHKSAEKRARQTIKRTER.

This sequence belongs to the bacterial ribosomal protein bS20 family.

Its function is as follows. Binds directly to 16S ribosomal RNA. The chain is Small ribosomal subunit protein bS20 from Campylobacter fetus subsp. fetus (strain 82-40).